We begin with the raw amino-acid sequence, 711 residues long: MLNPIVRKFQYGQHTVTLETGMMARQATAAVMVSMDDTAVFVTVVGQKKAKPGQDFFPLTVNYQERTYAAGRIPGSFFRREGRPSEGETLIARLIDRPIRPLFPEGFVNEVQVIATVVSVNPQVNPDIVAMIGASAALSLSGIPFNGPIGAARVGYINDQYVLNPTQDELKESKLDLVVAGTEAAVLMVESEAELLSEDQMLGAVVFGHEQQQVVIQNINELVKEAGKPRWDWQPEPVNEALNARVAALAEARLSDAYRITDKQERYAQVDVIKSETIATLLAEDETLDENELGEILHAIEKNVVRSRVLAGEPRIDGREKDMIRGLDVRTGVLPRTHGSALFTRGETQALVTATLGTARDAQVLDELMGERTDTFLFHYNFPPYSVGETGMVGSPKRREIGHGRLAKRGVLAVMPDMDKFPYTVRVVSEITESNGSSSMASVCGASLALMDAGVPIKAAVAGIAMGLVKEGDNYVVLSDILGDEDHLGDMDFKVAGSREGISALQMDIKIEGITKEIMQVALNQAKGARLHILGVMEQAINAPRGDISEFAPRIHTIKINPDKIKDVIGKGGSVIRALTEETGTTIEIEDDGTVKIAATDGEKAKHAIRRIEEITAEIEVGRVYTGKVTRIVDFGAFVAIGGGKEGLVHISQIADKRVEKVTDYLQMGQEVPVKVLEVDRQGRIRLSIKEATEQSQPAAAPEAPAAEQGE.

Positions 486 and 492 each coordinate Mg(2+). One can recognise a KH domain in the interval 553–612 (PRIHTIKINPDKIKDVIGKGGSVIRALTEETGTTIEIEDDGTVKIAATDGEKAKHAIRRI). Residues 622-690 (GRVYTGKVTR…RQGRIRLSIK (69 aa)) enclose the S1 motif domain. A disordered region spans residues 689–711 (IKEATEQSQPAAAPEAPAAEQGE). The span at 694-711 (EQSQPAAAPEAPAAEQGE) shows a compositional bias: low complexity.

Belongs to the polyribonucleotide nucleotidyltransferase family. Component of the RNA degradosome, which is a multiprotein complex involved in RNA processing and mRNA degradation. Requires Mg(2+) as cofactor.

Its subcellular location is the cytoplasm. The catalysed reaction is RNA(n+1) + phosphate = RNA(n) + a ribonucleoside 5'-diphosphate. Its function is as follows. Involved in mRNA degradation. Catalyzes the phosphorolysis of single-stranded polyribonucleotides processively in the 3'- to 5'-direction. The protein is Polyribonucleotide nucleotidyltransferase of Shigella flexneri serotype 5b (strain 8401).